A 467-amino-acid polypeptide reads, in one-letter code: UDP-N-acetylmuramoylalanine--D-glutamate ligase (467 aa).

Residue 115-121 participates in ATP binding; that stretch reads GTDGKTT.

Belongs to the MurCDEF family.

It localises to the cytoplasm. The catalysed reaction is UDP-N-acetyl-alpha-D-muramoyl-L-alanine + D-glutamate + ATP = UDP-N-acetyl-alpha-D-muramoyl-L-alanyl-D-glutamate + ADP + phosphate + H(+). Its pathway is cell wall biogenesis; peptidoglycan biosynthesis. Cell wall formation. Catalyzes the addition of glutamate to the nucleotide precursor UDP-N-acetylmuramoyl-L-alanine (UMA). This Chlorobaculum parvum (strain DSM 263 / NCIMB 8327) (Chlorobium vibrioforme subsp. thiosulfatophilum) protein is UDP-N-acetylmuramoylalanine--D-glutamate ligase.